A 78-amino-acid chain; its full sequence is Large ribosomal subunit protein bL28 (78 aa).

The interval Met-1–Ala-21 is disordered.

Belongs to the bacterial ribosomal protein bL28 family.

The sequence is that of Large ribosomal subunit protein bL28 from Cellvibrio japonicus (strain Ueda107) (Pseudomonas fluorescens subsp. cellulosa).